A 352-amino-acid chain; its full sequence is C-C chemokine receptor type 5 (352 aa).

Residues 1-30 (MDYQVSSPTYDIDYYTSEPCQKINVKQIAA) are Extracellular-facing. Tyr-3 carries the sulfotyrosine modification. O-linked (GalNAc...) serine glycosylation is found at Ser-6 and Ser-7. A sulfotyrosine mark is found at Tyr-10, Tyr-14, and Tyr-15. Cystine bridges form between Cys-20-Cys-269 and Cys-101-Cys-178. Residues 31–58 (RLLPPLYSLVFIFGFVGNMLVILILINC) form a helical membrane-spanning segment. Residues 59–68 (KRLKSMTDIY) are Cytoplasmic-facing. A helical transmembrane segment spans residues 69–89 (LLNLAISDLFFLLTVPFWAHY). Residues 90–102 (AAAQWDFGNTMCQ) are Extracellular-facing. The chain crosses the membrane as a helical span at residues 103–124 (LLTGLYFIGFFSGIFFIILLTI). Over 125–141 (DRYLAIVHAVFALKART) the chain is Cytoplasmic. The chain crosses the membrane as a helical span at residues 142–166 (VTFGVVTSVITWVVAVFASLPGIIF). The Extracellular segment spans residues 167-198 (TRSQKEGLHYTCSSHFPYSQYQFWKNFQTLKI). The helical transmembrane segment at 199–218 (VILGLVLPLLVMVICYSGIL) threads the bilayer. Over 219–235 (KTLLRCRNEKKRHRAVR) the chain is Cytoplasmic. The chain crosses the membrane as a helical span at residues 236-260 (LIFTIMIVYFLFWAPYNIVLLLNTF). The Extracellular portion of the chain corresponds to 261-277 (QEFFGLNNCSSSNRLDQ). Residues 278–301 (AMQVTETLGMTHCCINPIIYAFVG) traverse the membrane as a helical segment. The Cytoplasmic portion of the chain corresponds to 302 to 352 (EKFRNYLLVFFQKHIAKRFCKCCSIFQQEAPERASSVYTRSTGEQEISVGL). S-palmitoyl cysteine attachment occurs at residues Cys-321, Cys-323, and Cys-324. Ser-336, Ser-337, Ser-342, and Ser-349 each carry phosphoserine; by BARK1.

This sequence belongs to the G-protein coupled receptor 1 family. Interacts with PRAF2. Efficient ligand binding to CCL3/MIP-1alpha and CCL4/MIP-1beta requires sulfation, O-glycosylation and sialic acid modifications. Glycosylation on Ser-6 is required for efficient binding of CCL4. Interacts with GRK2. Interacts with ARRB1 and ARRB2. Interacts with CNIH4. Interacts with S100A4; this interaction stimulates T-lymphocyte chemotaxis. Post-translationally, sulfated on at least 2 of the N-terminal tyrosines. Sulfation is required for efficient binding of the chemokines, CCL3 and CCL4. In terms of processing, palmitoylation in the C-terminal is important for cell surface expression. Phosphorylation on serine residues in the C-terminal is stimulated by binding CC chemokines especially by APO-RANTES. Post-translationally, O-glycosylated, but not N-glycosylated. Ser-6 appears to be the major site even if Ser-7 may be also O-glycosylated. Also sialylated glycans present which contribute to chemokine binding. Thr-16 and Ser-17 may also be glycosylated and, if so, with small moieties such as a T-antigen.

The protein resides in the cell membrane. Receptor for a number of inflammatory CC-chemokines including CCL3/MIP-1-alpha, CCL4/MIP-1-beta and RANTES and subsequently transduces a signal by increasing the intracellular calcium ion level. May play a role in the control of granulocytic lineage proliferation or differentiation. Participates in T-lymphocyte migration to the infection site by acting as a chemotactic receptor. The protein is C-C chemokine receptor type 5 (CCR5) of Pongo abelii (Sumatran orangutan).